Reading from the N-terminus, the 326-residue chain is MSNAPGTSKFQIDLRRHLRAQNICDNLVHLMCEIAEASKYVINAVRTGDLGVAGTSNLYGEEQLALDVLSDRIMRKRLIHSGVVCNIASEEMDEIYQCQASADGLYSVAYDPLDGSSLVDVNLAVGTIVSIYAGCDLLQPGRNQVAAMYILYGPRVSLVYTVGDGVHEFTMNNLMEFTLTRENVKMAPEGNIYAPGGLRNKYNAGDEKFIRHLEEKGCKLRYSGGFVPDINQVLMKGKGLFMYPALNGSPNGKLRVLFELNPMAFIIEHAGGAASNGSIPILDIVPESLDQRAPIYIGCREDVKTATSFVNGGKQEVKMAGSFVNG.

4 residues coordinate Mg(2+): Glu90, Asp111, Leu113, and Asp114. Substrate is bound by residues Asp114–Ser117, Tyr222, and Lys253. Glu259 is a Mg(2+) binding site.

Belongs to the FBPase class 1 family. As to quaternary structure, homotetramer. The cofactor is Mg(2+).

Its subcellular location is the cytoplasm. It carries out the reaction beta-D-fructose 1,6-bisphosphate + H2O = beta-D-fructose 6-phosphate + phosphate. It functions in the pathway carbohydrate biosynthesis; gluconeogenesis. The polypeptide is Fructose-1,6-bisphosphatase class 1 (Citrifermentans bemidjiense (strain ATCC BAA-1014 / DSM 16622 / JCM 12645 / Bem) (Geobacter bemidjiensis)).